The sequence spans 317 residues: Tyrosine--tRNA ligase (317 aa).

An L-tyrosine-binding site is contributed by Tyr-33. A 'HIGH' region motif is present at residues 38–46 (PSGKIHMGH). Residues Tyr-155, Gln-159, Asp-162, and Gln-177 each coordinate L-tyrosine. The short motif at 211–215 (KMSSS) is the 'KMSKS' region element. Ser-214 serves as a coordination point for ATP.

This sequence belongs to the class-I aminoacyl-tRNA synthetase family. TyrS type 3 subfamily. Homodimer.

Its subcellular location is the cytoplasm. It catalyses the reaction tRNA(Tyr) + L-tyrosine + ATP = L-tyrosyl-tRNA(Tyr) + AMP + diphosphate + H(+). Functionally, catalyzes the attachment of tyrosine to tRNA(Tyr) in a two-step reaction: tyrosine is first activated by ATP to form Tyr-AMP and then transferred to the acceptor end of tRNA(Tyr). In Methanococcoides burtonii (strain DSM 6242 / NBRC 107633 / OCM 468 / ACE-M), this protein is Tyrosine--tRNA ligase.